The sequence spans 176 residues: Small ribosomal subunit protein uS5 (176 aa).

Positions 11 to 74 (LSEVLVDVNR…QAAKKRMMKV (64 aa)) constitute an S5 DRBM domain.

This sequence belongs to the universal ribosomal protein uS5 family. Part of the 30S ribosomal subunit. Contacts proteins S4 and S8.

With S4 and S12 plays an important role in translational accuracy. Functionally, located at the back of the 30S subunit body where it stabilizes the conformation of the head with respect to the body. This chain is Small ribosomal subunit protein uS5, found in Rickettsia rickettsii (strain Iowa).